The chain runs to 85 residues: Sec-independent protein translocase protein TatA (85 aa).

The chain crosses the membrane as a helical span at residues 1–21; it reads MGSMSIWHWLVVGVLVLLLFG. A disordered region spans residues 39 to 85; the sequence is FKKGMSEEDEPTQPAEPRPTPRLQQQPPIEPNADPKLQPMQDDRPQH.

Belongs to the TatA/E family. As to quaternary structure, the Tat system comprises two distinct complexes: a TatABC complex, containing multiple copies of TatA, TatB and TatC subunits, and a separate TatA complex, containing only TatA subunits. Substrates initially bind to the TatABC complex, which probably triggers association of the separate TatA complex to form the active translocon.

Its subcellular location is the cell inner membrane. Part of the twin-arginine translocation (Tat) system that transports large folded proteins containing a characteristic twin-arginine motif in their signal peptide across membranes. TatA could form the protein-conducting channel of the Tat system. The sequence is that of Sec-independent protein translocase protein TatA from Rhizorhabdus wittichii (strain DSM 6014 / CCUG 31198 / JCM 15750 / NBRC 105917 / EY 4224 / RW1) (Sphingomonas wittichii).